A 221-amino-acid polypeptide reads, in one-letter code: Adenylate kinase (221 aa).

An ATP-binding site is contributed by 10 to 15; the sequence is GAGKGT. The segment at 30 to 59 is NMP; that stretch reads STGDMLRAAVKARTELGVAAKKIMDAGGLV. AMP contacts are provided by residues T31, R36, 57-59, 85-88, and Q92; these read GLV and GFPR. Residues 122 to 159 form an LID region; sequence GRRVHLASGRTYHIKFNPPKVEGKDDITGDPLIQRDDD. ATP-binding positions include R123 and 132–133; that span reads TY. AMP-binding residues include R156 and R167. An ATP-binding site is contributed by S207.

It belongs to the adenylate kinase family. As to quaternary structure, monomer.

The protein localises to the cytoplasm. It carries out the reaction AMP + ATP = 2 ADP. It participates in purine metabolism; AMP biosynthesis via salvage pathway; AMP from ADP: step 1/1. Catalyzes the reversible transfer of the terminal phosphate group between ATP and AMP. Plays an important role in cellular energy homeostasis and in adenine nucleotide metabolism. In Polynucleobacter necessarius subsp. necessarius (strain STIR1), this protein is Adenylate kinase.